An 888-amino-acid chain; its full sequence is Calcium-transporting ATPase 1 (888 aa).

The next 4 helical transmembrane spans lie at 53–75 (IFAQINDVLVYVLIIAALISAFV), 79–97 (ADASIIALVVVLNAVIGVV), 246–266 (VGKYLGFVAVAICIVMFLIGF), and 283–303 (AVAAIPEGLPAIVSIVLAIGV). The Ca(2+) site is built by Val-284, Ala-285, Ile-287, and Glu-289. The active-site 4-aspartylphosphate intermediate is the Asp-331. Transmembrane regions (helical) follow at residues 675-695 (ILFLLSCNFGEIITLFLAILL), 703-723 (PIHILWVNLITDTLPALSLGV), 747-767 (VPFLIFNGVVIGLLTLIAFIA), 791-811 (LLHAQTMAFVVLSFSQLVHSF), 831-851 (LVFSLLIGVLMQVCIISIPPL), and 865-885 (WGFVLLLSIIPLVVNEIIKLA). Ca(2+)-binding residues include Asn-710 and Asp-714.

Belongs to the cation transport ATPase (P-type) (TC 3.A.3) family. Type IIA subfamily.

It is found in the cell membrane. It carries out the reaction Ca(2+)(in) + ATP + H2O = Ca(2+)(out) + ADP + phosphate + H(+). Its activity is regulated as follows. Inhibited by cyclopiazonic acid (CPA). Its function is as follows. Catalyzes the hydrolysis of ATP coupled with the transport of calcium. This chain is Calcium-transporting ATPase 1, found in Bacillus cereus (strain ATCC 10987 / NRS 248).